The following is a 715-amino-acid chain: Protein naked cuticle homolog (715 aa).

The EF-hand domain maps to Lys18–Ser53. Residues Ser256–Pro282 are disordered. Over residues Arg257–Ser273 the composition is skewed to basic residues. Residues Glu305–Asn334 are required for nuclear localization and inhibition of Wnt signaling. The tract at residues Glu639–Thr690 is disordered. Low complexity-rich tracts occupy residues Gln642–Pro664 and Gly673–Thr690.

The protein belongs to the NKD family.

Its subcellular location is the cell membrane. The protein localises to the cytoplasm. The protein resides in the nucleus. In terms of biological role, cell autonomous antagonist of the canonical Wnt signaling pathway. May activate a second Wnt signaling pathway that controls planar cell polarity. Required for neuroblast specification. This is Protein naked cuticle homolog from Aedes aegypti (Yellowfever mosquito).